The chain runs to 194 residues: Mitochondrial import inner membrane translocase subunit Tim22 (194 aa).

2 cysteine pairs are disulfide-bonded: Cys-69-Cys-141 and Cys-160-Cys-179. Transmembrane regions (helical) follow at residues 74-94, 123-143, and 170-190; these read ALAC…TAGI, MSYA…ECLI, and AGLK…AAID.

It belongs to the Tim17/Tim22/Tim23 family. Component of the TIM22 complex, whose core is composed of TIMM22, associated with peripheral protein FXC1/TIMM10B and the 70 kDa heterohexamer. In most cases, the 70 kDa complex is composed of TIMM9 and TIMM10 (TIMM10A or TIMM10B). A small fraction of the 70 kDa complex is composed of TIMM8 (TIMM8A/DDP1 or TIMM8B/DDP2) and TIMM13. The TIM22 complex also contains AGK and TIMM29. Interacts directly with TIMM9, TIMM10A and FXC1/TIMM10B. Interacts (when oxidized) with TIMM29; interaction is direct. Post-translationally, disulfide bonds promote efficient assembly of the TIM22 complex.

It localises to the mitochondrion inner membrane. Its function is as follows. Essential core component of the TIM22 complex, a complex that mediates the import and insertion of multi-pass transmembrane proteins into the mitochondrial inner membrane. In the TIM22 complex, it constitutes the voltage-activated and signal-gated channel. Forms a twin-pore translocase that uses the membrane potential as external driving force in 2 voltage-dependent steps. The sequence is that of Mitochondrial import inner membrane translocase subunit Tim22 (TIMM22) from Homo sapiens (Human).